Reading from the N-terminus, the 587-residue chain is Arginine--tRNA ligase (587 aa).

The short motif at Ala126–His136 is the 'HIGH' region element.

It belongs to the class-I aminoacyl-tRNA synthetase family. Monomer.

The protein resides in the cytoplasm. The catalysed reaction is tRNA(Arg) + L-arginine + ATP = L-arginyl-tRNA(Arg) + AMP + diphosphate. The chain is Arginine--tRNA ligase from Aromatoleum aromaticum (strain DSM 19018 / LMG 30748 / EbN1) (Azoarcus sp. (strain EbN1)).